We begin with the raw amino-acid sequence, 692 residues long: A-kinase anchor protein 8 (692 aa).

Positions 1 to 195 (MDQGYGGYGA…FMRGRGQGRF (195 aa)) are interaction with MCM2. The interaction with DPY30 stretch occupies residues 1 to 210 (MDQGYGGYGA…PGTFMRSDPF (210 aa)). Arg109 is modified (asymmetric dimethylarginine; alternate). Arg109 carries the omega-N-methylarginine; alternate modification. The interval 109–201 (RGGSGGGGEG…QGRFQDRSNP (93 aa)) is interaction with DDX5. A Phosphoserine modification is found at Ser112. Disordered stretches follow at residues 168–203 (GQYS…NPGT), 231–254 (GGRG…SMAP), and 269–382 (STMP…RTRD). Positions 172–182 (ECRDPARERGS) are enriched in basic and acidic residues. Ser199 is subject to Phosphoserine. 2 positions are modified to omega-N-methylarginine: Arg233 and Arg277. 2 stretches are compositionally biased toward basic and acidic residues: residues 281-297 (RMRD…DRFG) and 314-323 (PDTKLARVDS). Positions 289-306 (KRRGFDRFGPDGTGRKRK) match the Bipartite nuclear localization signal motif. Lys317 participates in a covalent cross-link: Glycyl lysine isopeptide (Lys-Gly) (interchain with G-Cter in SUMO2). Ser323, Ser328, and Ser339 each carry phosphoserine. Acidic residues predominate over residues 324–334 (EGDFSENDDAA). The segment at 387 to 450 (RIQFACSVCK…NKKIEKRRQE (64 aa)) is involved in chromatin-binding. 2 consecutive C2H2 AKAP95-type zinc fingers follow at residues 392–414 (CSVC…SKFH) and 481–504 (CLAC…SVDH). An involved in condensin complex recruitment region spans residues 525-569 (SVLNNRHIVKMLEKYLKGEDPFTSETVDPEMEGDDNLGGEDKKET). The disordered stretch occupies residues 545 to 571 (PFTSETVDPEMEGDDNLGGEDKKETPE). A compositionally biased stretch (acidic residues) spans 551–562 (VDPEMEGDDNLG). Lys567 participates in a covalent cross-link: Glycyl lysine isopeptide (Lys-Gly) (interchain with G-Cter in SUMO2). Residues 572 to 589 (EVAADVLAEVITAAVRAV) form an RII-binding region. Positions 576–593 (DVLAEVITAAVRAVDGEG) are required for interaction with MYCBP. The interval 592–692 (EGAPAPESSG…AESKDAVPTE (101 aa)) is disordered. Residues 634-646 (AHEKGVPKARSEA) are compositionally biased toward basic and acidic residues. The residue at position 662 (Ser662) is a Phosphoserine. Residues 663–675 (AQTRVAPAPAAAD) show a composition bias toward low complexity. Positions 683 to 692 (AESKDAVPTE) are enriched in basic and acidic residues. Position 685 is a phosphoserine (Ser685).

The protein belongs to the AKAP95 family. In terms of assembly, binds to the PKA RII-alpha regulatory subunit PRKAR2A (phosphorylated at 'Thr-54') during mitosis. Interacts (via C-terminus) with FIGN. Interacts with NCAPD2, CCND1, MCM2, RPS6KA1, PDE4A. Interacts with CCND3, CCNE1, DDX5, CASP3. Interacts with NFKB1; detetcted in the cytoplasm. Interacts with MYCBP; MYCBP is translocated to the nucleus and the interaction prevents the association of the PKA catalytic subunit leading to suppression of PKA activity. Interacts with DPY30; mediating AKAP8 association with at least the MLL4/WBP7 HMT complex. Interacts with HDAC3; increased during mitosis. Interacts with GJA1; in the nucleus and in the nuclear membrane; the nuclear association increases with progress of cell cycle G1, S and G2 phase and decreases in M phase. Post-translationally, phosphorylated on tyrosine residues probably by SRC subfamily protein kinases; multiple phosphorylation is leading to dissociation from nuclear structures implicated in chromatin structural changes. Highly expressed in heart, liver, skeletal muscle, kidney and pancreas. Expressed in mature dendritic cells.

The protein resides in the nucleus. It localises to the nucleus matrix. It is found in the nucleolus. Its subcellular location is the cytoplasm. Anchoring protein that mediates the subcellular compartmentation of cAMP-dependent protein kinase (PKA type II). Acts as an anchor for a PKA-signaling complex onto mitotic chromosomes, which is required for maintenance of chromosomes in a condensed form throughout mitosis. Recruits condensin complex subunit NCAPD2 to chromosomes required for chromatin condensation; the function appears to be independent from PKA-anchoring. May help to deliver cyclin D/E to CDK4 to facilitate cell cycle progression. Required for cell cycle G2/M transition and histone deacetylation during mitosis. In mitotic cells recruits HDAC3 to the vicinity of chromatin leading to deacetylation and subsequent phosphorylation at 'Ser-10' of histone H3; in this function may act redundantly with AKAP8L. Involved in nuclear retention of RPS6KA1 upon ERK activation thus inducing cell proliferation. May be involved in regulation of DNA replication by acting as scaffold for MCM2. Enhances HMT activity of the KMT2 family MLL4/WBP7 complex and is involved in transcriptional regulation. In a teratocarcinoma cell line is involved in retinoic acid-mediated induction of developmental genes implicating H3 'Lys-4' methylation. May be involved in recruitment of active CASP3 to the nucleus in apoptotic cells. May act as a carrier protein of GJA1 for its transport to the nucleus. May play a repressive role in the regulation of rDNA transcription. Preferentially binds GC-rich DNA in vitro. In cells, associates with ribosomal RNA (rRNA) chromatin, preferentially with rRNA promoter and transcribed regions. Involved in modulation of Toll-like receptor signaling. Required for the cAMP-dependent suppression of TNF-alpha in early stages of LPS-induced macrophage activation; the function probably implicates targeting of PKA to NFKB1. The chain is A-kinase anchor protein 8 (AKAP8) from Homo sapiens (Human).